Consider the following 100-residue polypeptide: NADH-quinone oxidoreductase subunit K (100 aa).

3 helical membrane passes run 4 to 24, 29 to 49, and 60 to 80; these read LSYS…GIMI, LFLL…FVIV, and VMYI…LALL.

The protein belongs to the complex I subunit 4L family. As to quaternary structure, NDH-1 is composed of 14 different subunits. Subunits NuoA, H, J, K, L, M, N constitute the membrane sector of the complex.

It localises to the cell membrane. It carries out the reaction a quinone + NADH + 5 H(+)(in) = a quinol + NAD(+) + 4 H(+)(out). NDH-1 shuttles electrons from NADH, via FMN and iron-sulfur (Fe-S) centers, to quinones in the respiratory chain. The immediate electron acceptor for the enzyme in this species is believed to be ubiquinone. Couples the redox reaction to proton translocation (for every two electrons transferred, four hydrogen ions are translocated across the cytoplasmic membrane), and thus conserves the redox energy in a proton gradient. This Baumannia cicadellinicola subsp. Homalodisca coagulata protein is NADH-quinone oxidoreductase subunit K.